Consider the following 23-residue polypeptide: IIDDTINGAITTADNIVGRIGII.

In terms of tissue distribution, expressed in skin glands.

Its subcellular location is the secreted. In terms of biological role, may act as an antimicrobial peptide. In Osteopilus septentrionalis (Cuban treefrog), this protein is Septenin 2d.